Consider the following 224-residue polypeptide: Thylakoid lumenal 15 kDa protein 1, chloroplastic (224 aa).

Residues 1-34 (MVILSNVSLFSCCNISQKPSLFSPSSRSSHCPIR) constitute a chloroplast transit peptide. The N-terminal 47 residues, 35 to 81 (CSQSQEGKEVVTSPLRSVVWSLGEEVSKRSLFALVSASLFFVDPALA), are a transit peptide targeting the thylakoid. 2 consecutive Pentapeptide repeat domains span residues 116–155 (SILR…DFSL) and 156–196 (ANVT…PLRD).

Its subcellular location is the plastid. The protein localises to the chloroplast thylakoid lumen. The chain is Thylakoid lumenal 15 kDa protein 1, chloroplastic from Arabidopsis thaliana (Mouse-ear cress).